The sequence spans 251 residues: Haloacid dehalogenase-like hydrolase domain-containing protein 3 (251 aa).

K15 is subject to N6-acetyllysine; alternate. N6-succinyllysine; alternate is present on K15.

Belongs to the HAD-like hydrolase superfamily.

The protein is Haloacid dehalogenase-like hydrolase domain-containing protein 3 (HDHD3) of Homo sapiens (Human).